A 481-amino-acid polypeptide reads, in one-letter code: Aspartyl/glutamyl-tRNA(Asn/Gln) amidotransferase subunit B (481 aa).

The protein belongs to the GatB/GatE family. GatB subfamily. As to quaternary structure, heterotrimer of A, B and C subunits.

It carries out the reaction L-glutamyl-tRNA(Gln) + L-glutamine + ATP + H2O = L-glutaminyl-tRNA(Gln) + L-glutamate + ADP + phosphate + H(+). The enzyme catalyses L-aspartyl-tRNA(Asn) + L-glutamine + ATP + H2O = L-asparaginyl-tRNA(Asn) + L-glutamate + ADP + phosphate + 2 H(+). Allows the formation of correctly charged Asn-tRNA(Asn) or Gln-tRNA(Gln) through the transamidation of misacylated Asp-tRNA(Asn) or Glu-tRNA(Gln) in organisms which lack either or both of asparaginyl-tRNA or glutaminyl-tRNA synthetases. The reaction takes place in the presence of glutamine and ATP through an activated phospho-Asp-tRNA(Asn) or phospho-Glu-tRNA(Gln). The polypeptide is Aspartyl/glutamyl-tRNA(Asn/Gln) amidotransferase subunit B (Pseudomonas syringae pv. tomato (strain ATCC BAA-871 / DC3000)).